The following is a 444-amino-acid chain: sn-glycerol-3-phosphate-binding periplasmic protein UgpB (444 aa).

The first 30 residues, 1 to 30, serve as a signal peptide directing secretion; that stretch reads MFNNTIRKTHAIRTAAACVAFALMSAGAQA. Sn-glycerol 3-phosphate is bound by residues tyrosine 72, glutamate 96, serine 151, serine 277, glycine 314, tyrosine 353, and arginine 404.

This sequence belongs to the bacterial solute-binding protein 1 family. The complex is composed of two ATP-binding proteins (UgpC), two transmembrane proteins (UgpA and UgpE) and a solute-binding protein (UgpB).

The protein localises to the periplasm. Part of the ABC transporter complex UgpBAEC involved in sn-glycerol-3-phosphate (G3P) import. Binds G3P. The protein is sn-glycerol-3-phosphate-binding periplasmic protein UgpB (ugpB) of Pectobacterium atrosepticum (strain SCRI 1043 / ATCC BAA-672) (Erwinia carotovora subsp. atroseptica).